Reading from the N-terminus, the 490-residue chain is Betaine aldehyde dehydrogenase (490 aa).

Positions 26 and 93 each coordinate K(+). 150–152 (GAW) provides a ligand contact to NAD(+). Lysine 162 acts as the Charge relay system in catalysis. 176-179 (KPSE) contributes to the NAD(+) binding site. Valine 180 lines the K(+) pocket. NAD(+) is bound at residue 230–233 (GVAT). Leucine 246 is a binding site for K(+). The active-site Proton acceptor is glutamate 252. 3 residues coordinate NAD(+): glycine 254, cysteine 286, and glutamate 387. Cysteine 286 serves as the catalytic Nucleophile. The residue at position 286 (cysteine 286) is a Cysteine sulfenic acid (-SOH). K(+) is bound by residues lysine 457 and glycine 460. The active-site Charge relay system is glutamate 464.

This sequence belongs to the aldehyde dehydrogenase family. Dimer of dimers. K(+) is required as a cofactor.

It catalyses the reaction betaine aldehyde + NAD(+) + H2O = glycine betaine + NADH + 2 H(+). It functions in the pathway amine and polyamine biosynthesis; betaine biosynthesis via choline pathway; betaine from betaine aldehyde: step 1/1. Its function is as follows. Involved in the biosynthesis of the osmoprotectant glycine betaine. Catalyzes the irreversible oxidation of betaine aldehyde to the corresponding acid. This chain is Betaine aldehyde dehydrogenase, found in Stenotrophomonas maltophilia (strain K279a).